Consider the following 460-residue polypeptide: Bifunctional protein GlmU (460 aa).

The segment at 1 to 232 (MALNVVILAA…AIEVEGANNR (232 aa)) is pyrophosphorylase. UDP-N-acetyl-alpha-D-glucosamine-binding positions include 8-11 (LAAG), Lys-22, Gln-73, 78-79 (GT), 100-102 (YGD), Gly-137, Glu-157, Asn-172, and Asn-230. Residue Asp-102 coordinates Mg(2+). Asn-230 contacts Mg(2+). A linker region spans residues 233 to 253 (VQLAQLERAYQAREAEKLMLA). Residues 254 to 460 (GANLRDPSRI…GWQRPVKIKK (207 aa)) form an N-acetyltransferase region. Residues Arg-336 and Lys-354 each contribute to the UDP-N-acetyl-alpha-D-glucosamine site. Residue His-366 is the Proton acceptor of the active site. UDP-N-acetyl-alpha-D-glucosamine contacts are provided by Tyr-369 and Asn-380. Acetyl-CoA-binding positions include Ala-383, 389 to 390 (NY), Ser-408, Ala-426, and Arg-443.

It in the N-terminal section; belongs to the N-acetylglucosamine-1-phosphate uridyltransferase family. In the C-terminal section; belongs to the transferase hexapeptide repeat family. In terms of assembly, homotrimer. Requires Mg(2+) as cofactor.

The protein localises to the cytoplasm. It carries out the reaction alpha-D-glucosamine 1-phosphate + acetyl-CoA = N-acetyl-alpha-D-glucosamine 1-phosphate + CoA + H(+). The enzyme catalyses N-acetyl-alpha-D-glucosamine 1-phosphate + UTP + H(+) = UDP-N-acetyl-alpha-D-glucosamine + diphosphate. It participates in nucleotide-sugar biosynthesis; UDP-N-acetyl-alpha-D-glucosamine biosynthesis; N-acetyl-alpha-D-glucosamine 1-phosphate from alpha-D-glucosamine 6-phosphate (route II): step 2/2. Its pathway is nucleotide-sugar biosynthesis; UDP-N-acetyl-alpha-D-glucosamine biosynthesis; UDP-N-acetyl-alpha-D-glucosamine from N-acetyl-alpha-D-glucosamine 1-phosphate: step 1/1. It functions in the pathway bacterial outer membrane biogenesis; LPS lipid A biosynthesis. Functionally, catalyzes the last two sequential reactions in the de novo biosynthetic pathway for UDP-N-acetylglucosamine (UDP-GlcNAc). The C-terminal domain catalyzes the transfer of acetyl group from acetyl coenzyme A to glucosamine-1-phosphate (GlcN-1-P) to produce N-acetylglucosamine-1-phosphate (GlcNAc-1-P), which is converted into UDP-GlcNAc by the transfer of uridine 5-monophosphate (from uridine 5-triphosphate), a reaction catalyzed by the N-terminal domain. This is Bifunctional protein GlmU from Shewanella baltica (strain OS185).